The primary structure comprises 2273 residues: Acetyl-CoA carboxylase, mitochondrial (2273 aa).

The N-terminal 104 residues, 1–104 (KGKTITHGQS…RGNIHKHTRL (104 aa)), are a transit peptide targeting the mitochondrion. The 502-residue stretch at 134–635 (VISKILIANN…STGWLDDLIL (502 aa)) folds into the Biotin carboxylation domain. The region spanning 292-484 (KTNFVSVPDD…LPATQLQIAM (193 aa)) is the ATP-grasp domain. 332–337 (GGGGKG) contributes to the ATP binding site. Arginine 459 is an active-site residue. The region spanning 763-837 (LEAELNPTQV…EAGDVIAKLT (75 aa)) is the Biotinyl-binding domain. Residue lysine 804 is modified to N6-biotinyllysine. Positions 1532 to 1867 (PYSVKDWLQP…KRDMSPPLLE (336 aa)) constitute a CoA carboxyltransferase N-terminal domain. A carboxyltransferase region spans residues 1532-2187 (PYSVKDWLQP…EGQVIKRLQK (656 aa)). Residues arginine 1776, lysine 2080, and arginine 2082 each contribute to the CoA site. The CoA carboxyltransferase C-terminal domain maps to 1871–2187 (RWDRDVDFKP…EGQVIKRLQK (317 aa)).

The cofactor is biotin.

The protein resides in the mitochondrion. It catalyses the reaction hydrogencarbonate + acetyl-CoA + ATP = malonyl-CoA + ADP + phosphate + H(+). The enzyme catalyses N(6)-biotinyl-L-lysyl-[protein] + hydrogencarbonate + ATP = N(6)-carboxybiotinyl-L-lysyl-[protein] + ADP + phosphate + H(+). The protein operates within lipid metabolism; malonyl-CoA biosynthesis; malonyl-CoA from acetyl-CoA: step 1/1. Its function is as follows. Catalyzes the rate-limiting reaction in the mitochondrial fatty acid synthesis (FAS) type II pathway. Responsible for the production of the mitochondrial malonyl-CoA, used for the biosynthesis of the cofactor lipoic acid. This protein carries three functions: biotin carboxyl carrier protein, biotin carboxylase, and carboxyltransferase. This Saccharomyces cerevisiae (strain Lalvin EC1118 / Prise de mousse) (Baker's yeast) protein is Acetyl-CoA carboxylase, mitochondrial (HFA1).